The chain runs to 535 residues: Glucans biosynthesis protein D 1 (535 aa).

A signal peptide (tat-type signal) is located at residues 1–28; sequence MHRRDLLKQLAAGFLALAPGLTPSTASA. The insert stretch occupies residues 275-287; the sequence is RTDRAGDRQSAAR.

The protein belongs to the OpgD/OpgG family. Predicted to be exported by the Tat system. The position of the signal peptide cleavage has not been experimentally proven.

It is found in the periplasm. The protein operates within glycan metabolism; osmoregulated periplasmic glucan (OPG) biosynthesis. Functionally, probably involved in the control of the structural glucose backbone of osmoregulated periplasmic glucans (OPGs). The protein is Glucans biosynthesis protein D 1 (opgD1) of Ralstonia nicotianae (strain ATCC BAA-1114 / GMI1000) (Ralstonia solanacearum).